The following is a 681-amino-acid chain: Mating-type protein beta1-1 (681 aa).

A DNA-binding region (homeobox; TALE-type) is located at residues 165–227; that stretch reads DKNEPTSPTP…DARRRIGWNE (63 aa). A compositionally biased stretch (basic and acidic residues) spans 307–318; sequence LKNDEARRKREA. 3 disordered regions span residues 307–341, 353–381, and 394–466; these read LKNDEARRKREASTVGIINQRARHAYPTPERSPAS, AIDSDKLPSVGRKRRRSLESDETVSSPLC, and SPVK…SDPF. Residues 413–430 are compositionally biased toward low complexity; sequence TSAAPSPQPSLLPKLTPT.

It belongs to the TALE/M-ATYP homeobox family. In terms of assembly, may dimerize.

It is found in the nucleus. Functionally, has a major regulatory role in sexual and asexual development. It may bind DNA itself or it may have a role in preventing DNA-binding of another protein. The chain is Mating-type protein beta1-1 from Coprinopsis cinerea (Inky cap fungus).